The chain runs to 353 residues: Abasic site processing protein HMCES (353 aa).

C2 (nucleophile) is an active-site residue. At C2 the chain carries Thiazolidine linkage to a ring-opened DNA abasic site. Residue E127 is part of the active site. Glycyl lysine isopeptide (Lys-Gly) (interchain with G-Cter in SUMO2) cross-links involve residues K148 and K151. S160 carries the phosphoserine modification. Glycyl lysine isopeptide (Lys-Gly) (interchain with G-Cter in SUMO2) cross-links involve residues K274 and K275. The tract at residues 292–353 is disordered; sequence TKSPKKEVPD…DEPVAKRPNS (62 aa). A Phosphoserine modification is found at S294. The span at 295–307 shows a compositional bias: basic and acidic residues; it reads PKKEVPDSPKKDA. K305 is covalently cross-linked (Glycyl lysine isopeptide (Lys-Gly) (interchain with G-Cter in SUMO2)). Position 321 is a phosphoserine (S321). Positions 332–338 match the PIP-box motif; it reads SLLDRWL. Positions 336-353 are enriched in basic and acidic residues; sequence RWLKQEKEDEPVAKRPNS. Glycyl lysine isopeptide (Lys-Gly) (interchain with G-Cter in SUMO2) cross-links involve residues K339 and K342.

Belongs to the SOS response-associated peptidase family. As to quaternary structure, interacts (via PIP-box motif) with PCNA. Post-translationally, ubiquitinated; the covalent HMCES DNA-protein cross-link is ubiquitinated, leading to its degradation by the proteasome.

It localises to the chromosome. With respect to regulation, formation and reversal of DNA-protein cross-link depends on DNA context. Catalyzes formation of the thiazolidine linkage in presence of abasic sites in single-stranded DNA. Mediates the reversal of the thiazolidine cross-link in presence of double stranded DNA. In terms of biological role, sensor of abasic sites in single-stranded DNA (ssDNA) required to preserve genome integrity by promoting error-free repair of abasic sites. Acts as an enzyme that recognizes and binds abasic sites in ssDNA at replication forks and chemically modifies the lesion by forming a covalent cross-link with DNA: forms a stable thiazolidine linkage between a ring-opened abasic site and the alpha-amino and sulfhydryl substituents of its N-terminal catalytic cysteine residue. Promotes error-free repair by protecting abasic sites from translesion synthesis (TLS) polymerases and endonucleases that are error-prone and would generate mutations and double-strand breaks. The HMCES DNA-protein cross-link is then either reversed or degraded. HMCES is able to catalyze the reversal of its thiazolidine cross-link and cycle between a cross-link and a non-cross-linked state depending on DNA context: mediates self-reversal of the thiazolidine cross-link in double stranded DNA, allowing APEX1 to initiate downstream repair of abasic sites. The HMCES DNA-protein cross-link can also be degraded by the SPRTN metalloprotease following unfolding by the BRIP1/FANCJ helicase. Has preference for ssDNA, but can also accommodate double-stranded DNA with 3' or 5' overhang (dsDNA), and dsDNA-ssDNA 3' junction. Plays a protective role during somatic hypermutation of immunoglobulin genes in B-cells: acts via its ability to form covalent cross-links with abasic sites, thereby limiting the accumulation of deletions in somatic hypermutation target regions. Also involved in class switch recombination (CSR) in B-cells independently of the formation of a DNA-protein cross-link: acts by binding and protecting ssDNA overhangs to promote DNA double-strand break repair through the microhomology-mediated alternative-end-joining (Alt-EJ) pathway. Acts as a protease: mediates autocatalytic processing of its N-terminal methionine in order to expose the catalytic cysteine. In Rattus norvegicus (Rat), this protein is Abasic site processing protein HMCES.